The primary structure comprises 265 residues: 4-diphosphocytidyl-2-C-methyl-D-erythritol kinase (265 aa).

The active site involves K8. 95 to 105 provides a ligand contact to ATP; it reads PIGAGLGGGSS. D135 is a catalytic residue.

This sequence belongs to the GHMP kinase family. IspE subfamily.

The catalysed reaction is 4-CDP-2-C-methyl-D-erythritol + ATP = 4-CDP-2-C-methyl-D-erythritol 2-phosphate + ADP + H(+). It participates in isoprenoid biosynthesis; isopentenyl diphosphate biosynthesis via DXP pathway; isopentenyl diphosphate from 1-deoxy-D-xylulose 5-phosphate: step 3/6. Catalyzes the phosphorylation of the position 2 hydroxy group of 4-diphosphocytidyl-2C-methyl-D-erythritol. This is 4-diphosphocytidyl-2-C-methyl-D-erythritol kinase from Ureaplasma urealyticum serovar 10 (strain ATCC 33699 / Western).